The sequence spans 742 residues: Protein-associating with the carboxyl-terminal domain of ezrin (742 aa).

Gly2 carries the N-myristoyl glycine lipid modification. The Protein kinase domain maps to 2-245 (GSENSALKSY…LCTLLSHDFF (244 aa)). HEAT repeat units lie at residues 199-238 (ESLL…ALCT), 285-323 (LIAS…HAQG), 333-370 (LFQS…HFTQ), and 372-409 (QLKK…LLGP). At Ser439 the chain carries Phosphoserine. Disordered stretches follow at residues 506 to 544 (LSDV…QTVN), 568 to 598 (SSWD…TSGE), and 629 to 652 (GDDA…VPSE). Acidic residues predominate over residues 529-539 (WPDWSEPEEPE). Residues 548–742 (WPREPCDDVK…GELNWEDNNW (195 aa)) are interaction with EZR. The residue at position 707 (Ser707) is a Phosphoserine. The interval 723–742 (EGEAEGWEEEGELNWEDNNW) is disordered.

The protein belongs to the protein kinase superfamily. In terms of assembly, interacts with EZR/VIL2 C-terminal domain. In terms of processing, may be myristoylated; myristoylation may target it to Golgi compartment. Post-translationally, phosphorylated. In terms of tissue distribution, ubiquitously expressed.

It localises to the cytoplasm. Its subcellular location is the golgi apparatus. The protein localises to the cell projection. The protein resides in the lamellipodium. In terms of biological role, may play a role in regulating cell adhesion/migration complexes in migrating cells. In Homo sapiens (Human), this protein is Protein-associating with the carboxyl-terminal domain of ezrin (SCYL3).